Consider the following 462-residue polypeptide: G-patch domain and KOW motifs-containing protein homolog 1 (462 aa).

Disordered stretches follow at residues 1-26 (MVEQ…KREE) and 182-218 (LKLP…EEEK). In terms of domain architecture, G-patch spans 154 to 202 (IESFGLAILRGCNWKDGDGIGKNPQKVALKLPNRRPPGLGLGATPKNPV). A KOW 1 domain is found at 221 to 248 (EIKVGSFIKVVDGRNKGVYGKVEGRDDD). Residues 289–305 (EYDKEKDRLETERKKLE) show a composition bias toward basic and acidic residues. The tract at residues 289–337 (EYDKEKDRLETERKKLESQPPSTSTSQSSKDYKSKSSSSKHDKNSSEYE) is disordered. A compositionally biased stretch (low complexity) spans 306-317 (SQPPSTSTSQSS). Residues 318-337 (KDYKSKSSSSKHDKNSSEYE) show a composition bias toward basic and acidic residues. The KOW 2 domain maps to 401–428 (PREIGEKLMIVAGKRSGQLAVMLDKDKR).

The protein belongs to the MOS2 family.

It localises to the nucleus. This Caenorhabditis elegans protein is G-patch domain and KOW motifs-containing protein homolog 1.